A 292-amino-acid chain; its full sequence is 4-hydroxybenzoate octaprenyltransferase (292 aa).

A run of 8 helical transmembrane segments spans residues 20–40 (IGIL…ADGM), 43–63 (PMIL…GCAI), 94–114 (LLIA…LNLL), 135–155 (FFAM…PMAF), 160–180 (GTVP…VIAY), 209–229 (VAGI…AGIL), 234–254 (IWFY…YGMI), and 266–286 (FLHN…DTLF).

This sequence belongs to the UbiA prenyltransferase family. The cofactor is Mg(2+).

The protein localises to the cell inner membrane. It catalyses the reaction all-trans-octaprenyl diphosphate + 4-hydroxybenzoate = 4-hydroxy-3-(all-trans-octaprenyl)benzoate + diphosphate. It participates in cofactor biosynthesis; ubiquinone biosynthesis. Functionally, catalyzes the prenylation of para-hydroxybenzoate (PHB) with an all-trans polyprenyl group. Mediates the second step in the final reaction sequence of ubiquinone-8 (UQ-8) biosynthesis, which is the condensation of the polyisoprenoid side chain with PHB, generating the first membrane-bound Q intermediate 3-octaprenyl-4-hydroxybenzoate. The sequence is that of 4-hydroxybenzoate octaprenyltransferase from Nitrosomonas europaea (strain ATCC 19718 / CIP 103999 / KCTC 2705 / NBRC 14298).